The following is a 104-amino-acid chain: Large ribosomal subunit protein uL24 (104 aa).

The protein belongs to the universal ribosomal protein uL24 family. As to quaternary structure, part of the 50S ribosomal subunit.

Functionally, one of two assembly initiator proteins, it binds directly to the 5'-end of the 23S rRNA, where it nucleates assembly of the 50S subunit. Its function is as follows. One of the proteins that surrounds the polypeptide exit tunnel on the outside of the subunit. This chain is Large ribosomal subunit protein uL24, found in Shewanella halifaxensis (strain HAW-EB4).